The sequence spans 280 residues: Gem-associated protein 2 (280 aa).

The tract at residues 1-39 (MRRAELAGLKTMAWVPAESAVEELMPRLLPVEPCDLTEG) is may play a minor inhibitory role in snRNA binding to 5Sm (SNRPD1, SNRPD2, SNRPE, SNRPF and SNRPG) during snRNP assembly by inserting into the RNA binding pocket of 5Sm. Phosphoserine occurs at positions 81 and 166.

The protein belongs to the gemin-2 family. As to quaternary structure, monomer. Part of the core SMN complex that contains SMN1, GEMIN2/SIP1, DDX20/GEMIN3, GEMIN4, GEMIN5, GEMIN6, GEMIN7, GEMIN8 and STRAP/UNRIP. Part of the SMN-Sm complex that contains SMN1, GEMIN2/SIP1, DDX20/GEMIN3, GEMIN4, GEMIN5, GEMIN6, GEMIN7, GEMIN8, STRAP/UNRIP and the Sm proteins SNRPB, SNRPD1, SNRPD2, SNRPD3, SNRPE, SNRPF and SNRPG. Interacts with GEMIN5; the interaction is direct. Interacts (via C-terminus) with SMN1; the interaction is direct. Interacts with SNRPD1; the interaction is direct. Interacts with SNRPD2; the interaction is direct. Interacts (via N-terminus) with SNRPF; the interaction is direct. Interacts (via N-terminus) with SNRPE; the interaction is direct. Interacts (via N-terminus) with SNRPG; the interaction is direct.

The protein resides in the nucleus. Its subcellular location is the gem. It is found in the cytoplasm. In terms of biological role, the SMN complex catalyzes the assembly of small nuclear ribonucleoproteins (snRNPs), the building blocks of the spliceosome, and thereby plays an important role in the splicing of cellular pre-mRNAs. Most spliceosomal snRNPs contain a common set of Sm proteins SNRPB, SNRPD1, SNRPD2, SNRPD3, SNRPE, SNRPF and SNRPG that assemble in a heptameric protein ring on the Sm site of the small nuclear RNA to form the core snRNP (Sm core). In the cytosol, the Sm proteins SNRPD1, SNRPD2, SNRPE, SNRPF and SNRPG (5Sm) are trapped in an inactive 6S pICln-Sm complex by the chaperone CLNS1A that controls the assembly of the core snRNP. To assemble core snRNPs, the SMN complex accepts the trapped 5Sm proteins from CLNS1A. Binding of snRNA inside 5Sm ultimately triggers eviction of the SMN complex, thereby allowing binding of SNRPD3 and SNRPB to complete assembly of the core snRNP. Within the SMN complex, GEMIN2 constrains the conformation of 5Sm, thereby promoting 5Sm binding to snRNA containing the snRNP code (a nonameric Sm site and a 3'-adjacent stem-loop), thus preventing progression of assembly until a cognate substrate is bound. This is Gem-associated protein 2 from Homo sapiens (Human).